Reading from the N-terminus, the 351-residue chain is Methylthioribose-1-phosphate isomerase (351 aa).

Substrate contacts are provided by residues 51-53 (RGA), Arg94, and Gln199. Asp240 functions as the Proton donor in the catalytic mechanism. 250–251 (NK) provides a ligand contact to substrate.

It belongs to the EIF-2B alpha/beta/delta subunits family. MtnA subfamily. As to quaternary structure, homodimer.

The enzyme catalyses 5-(methylsulfanyl)-alpha-D-ribose 1-phosphate = 5-(methylsulfanyl)-D-ribulose 1-phosphate. Its pathway is amino-acid biosynthesis; L-methionine biosynthesis via salvage pathway; L-methionine from S-methyl-5-thio-alpha-D-ribose 1-phosphate: step 1/6. In terms of biological role, catalyzes the interconversion of methylthioribose-1-phosphate (MTR-1-P) into methylthioribulose-1-phosphate (MTRu-1-P). The chain is Methylthioribose-1-phosphate isomerase from Bacillus cereus (strain ZK / E33L).